The following is a 485-amino-acid chain: Glycogen synthase (485 aa).

K15 is a binding site for ADP-alpha-D-glucose.

This sequence belongs to the glycosyltransferase 1 family. Bacterial/plant glycogen synthase subfamily.

The enzyme catalyses [(1-&gt;4)-alpha-D-glucosyl](n) + ADP-alpha-D-glucose = [(1-&gt;4)-alpha-D-glucosyl](n+1) + ADP + H(+). It functions in the pathway glycan biosynthesis; glycogen biosynthesis. Its function is as follows. Synthesizes alpha-1,4-glucan chains using ADP-glucose. The sequence is that of Glycogen synthase from Fervidobacterium nodosum (strain ATCC 35602 / DSM 5306 / Rt17-B1).